The chain runs to 452 residues: uncharacterized protein (452 aa).

Residues 1 to 20 form the signal peptide; that stretch reads MQFFGSLFVSLLGAAGLANA. Residues 130-151 form a disordered region; sequence TQSSSNSTSTMNSTGSVSGGSV.

The protein resides in the endoplasmic reticulum. This is an uncharacterized protein from Schizosaccharomyces pombe (strain 972 / ATCC 24843) (Fission yeast).